Here is an 891-residue protein sequence, read N- to C-terminus: Major core protein OPG136 precursor (891 aa).

Residues 615 to 697 constitute a propeptide that is removed on maturation; sequence SPEGEETIIC…ILDRIITNAG (83 aa).

This sequence belongs to the orthopxvirus protein OPG136 family. In terms of assembly, interacts with P39/A4. The precursor is cleaved by OPG083 to give rise to the 62 kDa mature protein during virion maturation. Proteolytic cleavage of major core proteins OPG136, OPG129, and OPG098, which occurs at a late stage of core formation, is required for production of infectious mature virions (MV).

It localises to the virion. Its function is as follows. Core protein 4a is the most abundant virion protein. Major component of the virion core that undergoes proteolytic processing during the immature virion (IV) to mature virion (MV) transition. The polypeptide is Major core protein OPG136 precursor (OPG136) (Cynomys gunnisoni (Gunnison's prairie dog)).